The primary structure comprises 405 residues: L-carnitine CoA-transferase (405 aa).

CoA is bound by residues Lys-97 and Arg-104. Asp-169 acts as the Nucleophile in catalysis.

It belongs to the CoA-transferase III family. CaiB subfamily. In terms of assembly, homodimer.

It localises to the cytoplasm. The catalysed reaction is crotonobetainyl-CoA + (R)-carnitine = crotonobetaine + (R)-carnitinyl-CoA. It carries out the reaction 4-(trimethylamino)butanoyl-CoA + (R)-carnitine = (R)-carnitinyl-CoA + 4-(trimethylamino)butanoate. It functions in the pathway amine and polyamine metabolism; carnitine metabolism. In terms of biological role, catalyzes the reversible transfer of the CoA moiety from gamma-butyrobetainyl-CoA to L-carnitine to generate L-carnitinyl-CoA and gamma-butyrobetaine. Is also able to catalyze the reversible transfer of the CoA moiety from gamma-butyrobetainyl-CoA or L-carnitinyl-CoA to crotonobetaine to generate crotonobetainyl-CoA. The chain is L-carnitine CoA-transferase from Shigella flexneri serotype 5b (strain 8401).